Reading from the N-terminus, the 224-residue chain is Large ribosomal subunit protein bL25 (224 aa).

The protein belongs to the bacterial ribosomal protein bL25 family. CTC subfamily. As to quaternary structure, part of the 50S ribosomal subunit; part of the 5S rRNA/L5/L18/L25 subcomplex. Contacts the 5S rRNA. Binds to the 5S rRNA independently of L5 and L18.

This is one of the proteins that binds to the 5S RNA in the ribosome where it forms part of the central protuberance. In Psychrobacter arcticus (strain DSM 17307 / VKM B-2377 / 273-4), this protein is Large ribosomal subunit protein bL25.